A 244-amino-acid chain; its full sequence is 1-(5-phosphoribosyl)-5-[(5-phosphoribosylamino)methylideneamino] imidazole-4-carboxamide isomerase (244 aa).

The Proton acceptor role is filled by D9. The Proton donor role is filled by D131.

It belongs to the HisA/HisF family.

The protein localises to the cytoplasm. It catalyses the reaction 1-(5-phospho-beta-D-ribosyl)-5-[(5-phospho-beta-D-ribosylamino)methylideneamino]imidazole-4-carboxamide = 5-[(5-phospho-1-deoxy-D-ribulos-1-ylimino)methylamino]-1-(5-phospho-beta-D-ribosyl)imidazole-4-carboxamide. The protein operates within amino-acid biosynthesis; L-histidine biosynthesis; L-histidine from 5-phospho-alpha-D-ribose 1-diphosphate: step 4/9. The sequence is that of 1-(5-phosphoribosyl)-5-[(5-phosphoribosylamino)methylideneamino] imidazole-4-carboxamide isomerase from Campylobacter jejuni subsp. jejuni serotype O:6 (strain 81116 / NCTC 11828).